A 348-amino-acid polypeptide reads, in one-letter code: MKNLFNLFLMFFFAMPILSLSENPTNFSESCEDGSGETGSSFGIGFDLVLDFGLYRNSCPEAESIVYSWVETTVLEDPRMAASLLRLHFHDCFVNGCDASVLLDDTEGLVGEKTAPPNLNSLRGFEVIDSIKSDIESVCPETVSCADILAMAARDSVVVSGGPRWEVEVGRKDSRTASKQAATNGLPSPNSTVSTLISTFQNLGLSQTDMVALSGGHTLGKARCTSFTARLQPLQTGQPANHGDNLEFLESLQQLCSTVGPSVGITQLDLVTPSTFDNQYYVNLLSGEGLLPSDQALAVQDPGTRAIVETYATDQSVFFEDFKNAMVKMGGIPGGSNSEIRKNCRMIN.

Residues 1 to 21 form the signal peptide; the sequence is MKNLFNLFLMFFFAMPILSLS. N26 carries N-linked (GlcNAc...) asparagine glycosylation. 4 disulfides stabilise this stretch: C59-C139, C92-C97, C145-C344, and C224-C256. The Proton acceptor role is filled by H90. 5 residues coordinate Ca(2+): D91, V94, G96, D98, and S100. The disordered stretch occupies residues 170-189; sequence GRKDSRTASKQAATNGLPSP. Over residues 177-189 the composition is skewed to polar residues; it reads ASKQAATNGLPSP. P187 contributes to the substrate binding site. Residue N190 is glycosylated (N-linked (GlcNAc...) asparagine). H217 serves as a coordination point for heme b. Residue T218 participates in Ca(2+) binding. Ca(2+) contacts are provided by D269, T272, and D277.

This sequence belongs to the peroxidase family. Classical plant (class III) peroxidase subfamily. The cofactor is heme b. Ca(2+) serves as cofactor.

It localises to the secreted. It carries out the reaction 2 a phenolic donor + H2O2 = 2 a phenolic radical donor + 2 H2O. Its function is as follows. Removal of H(2)O(2), oxidation of toxic reductants, biosynthesis and degradation of lignin, suberization, auxin catabolism, response to environmental stresses such as wounding, pathogen attack and oxidative stress. These functions might be dependent on each isozyme/isoform in each plant tissue. In Arabidopsis thaliana (Mouse-ear cress), this protein is Peroxidase 40 (PER40).